The sequence spans 153 residues: Ribonuclease H (153 aa).

Positions 1–142 (MRKKIEIFTD…CDELARIAAE (142 aa)) constitute an RNase H type-1 domain. Residues Asp-10, Glu-48, Asp-70, and Asp-134 each coordinate Mg(2+).

The protein belongs to the RNase H family. Monomer. Mg(2+) is required as a cofactor.

Its subcellular location is the cytoplasm. It carries out the reaction Endonucleolytic cleavage to 5'-phosphomonoester.. In terms of biological role, endonuclease that specifically degrades the RNA of RNA-DNA hybrids. This chain is Ribonuclease H, found in Baumannia cicadellinicola subsp. Homalodisca coagulata.